The chain runs to 122 residues: Large ribosomal subunit protein uL14 (122 aa).

The protein belongs to the universal ribosomal protein uL14 family. Part of the 50S ribosomal subunit. Forms a cluster with proteins L3 and L19. In the 70S ribosome, L14 and L19 interact and together make contacts with the 16S rRNA in bridges B5 and B8.

In terms of biological role, binds to 23S rRNA. Forms part of two intersubunit bridges in the 70S ribosome. This chain is Large ribosomal subunit protein uL14, found in Ruthia magnifica subsp. Calyptogena magnifica.